The sequence spans 454 residues: Protein IQ-DOMAIN 1 (454 aa).

A calmodulin-binding region spans residues 103–113 (GKSKEEAAAIL). One can recognise an IQ domain in the interval 107–136 (EEAAAILIQSTFRGHLARRESQVMRGQERL). The interval 272–454 (WESSEKEQNT…KGVLKAERTP (183 aa)) is disordered. The span at 280 to 328 (NTTNNDNSSVKNSTNRNSQGGETAKSSNRNKLNSSTKPNTPSASSTATR) shows a compositional bias: polar residues. Residues 343 to 356 (KSSDDEAKSSERNR) are compositionally biased toward basic and acidic residues. The segment covering 371 to 388 (LSSSTARRSSNLIPTTKS) has biased composition (polar residues). Residues 397-412 (TSSRVAVTTSTTEESS) show a composition bias toward low complexity. Positions 421–428 (KKRLSTSA) match the Nuclear localization signal motif. The segment covering 442-454 (KVEKGVLKAERTP) has biased composition (basic and acidic residues).

Belongs to the IQD family. In terms of assembly, binds to multiple calmodulin (CaM) in the presence of Ca(2+)(e.g. CaM1 and CaM2) and CaM-like (e.g. CML8 and CML9) proteins. Interacts with KLCR1. Expressed in roots, flowers, stems, siliques, inflorescence stems and whole shoots. Restricted to the vascular bundles.

It is found in the nucleus. The protein localises to the nucleolus. It localises to the cytoplasm. The protein resides in the cytoskeleton. May be involved in cooperative interactions with calmodulins or calmodulin-like proteins. Modulates expression of glucosinolate pathway genes. May associate with nucleic acids and regulate gene expression at the transcriptional or post-transcriptional level. Recruits KLCR1 and calmodulin proteins to microtubules, thus being a potential scaffold in cellular signaling and trafficking. The polypeptide is Protein IQ-DOMAIN 1 (Arabidopsis thaliana (Mouse-ear cress)).